The sequence spans 213 residues: Thymidine kinase (213 aa).

ATP contacts are provided by residues Gly20–Thr27 and Asp93–Gln96. Glu94 serves as the catalytic Proton acceptor. Zn(2+) is bound by residues Cys150, Cys153, Cys185, and His188.

The protein belongs to the thymidine kinase family. Homotetramer.

It localises to the cytoplasm. The enzyme catalyses thymidine + ATP = dTMP + ADP + H(+). The chain is Thymidine kinase from Mycoplasma genitalium (strain ATCC 33530 / DSM 19775 / NCTC 10195 / G37) (Mycoplasmoides genitalium).